A 257-amino-acid chain; its full sequence is MLFLLSPAKSLDYQTPTRVAATEPLYTRQAADLIEILRTKTPVEVAELMDLSDALAGLNVARYAAWQPQADRHNSKPAVLAFNGDVYDGLDARTLATPDLRWAQSHLVILSGLYGALRPLDALQPYRLEMGTRLANPQGPDLYAWWGDTVSDYLNERQSGEPHPVVVNLASQEYFKVVRRGVLKARVVDCVFEDWKGGVYKIISFHAKRARGLMARYAITQRIRRVADLQGFDLAGYAYAPAVSGPDRLVFRRHPAD.

The protein belongs to the UPF0246 family.

This Leptothrix cholodnii (strain ATCC 51168 / LMG 8142 / SP-6) (Leptothrix discophora (strain SP-6)) protein is UPF0246 protein Lcho_2652.